The chain runs to 365 residues: Cobalt-precorrin-5B C(1)-methyltransferase (365 aa).

Belongs to the CbiD family.

The catalysed reaction is Co-precorrin-5B + S-adenosyl-L-methionine = Co-precorrin-6A + S-adenosyl-L-homocysteine. The protein operates within cofactor biosynthesis; adenosylcobalamin biosynthesis; cob(II)yrinate a,c-diamide from sirohydrochlorin (anaerobic route): step 6/10. In terms of biological role, catalyzes the methylation of C-1 in cobalt-precorrin-5B to form cobalt-precorrin-6A. The chain is Cobalt-precorrin-5B C(1)-methyltransferase from Variovorax paradoxus (strain S110).